The sequence spans 520 residues: Ribonuclease Y (520 aa).

A helical membrane pass occupies residues 5–25; the sequence is ITIISSLLFLIVGLVVGSLIF. The tract at residues 76–127 is disordered; sequence ELRGRRTETQKAENRLLQREENLDRKDTSLSKREATLERKEESISKRQQQIE. Positions 210-273 constitute a KH domain; it reads TVSVVTLPND…EIARIALEKL (64 aa). The HD domain maps to 336-429; that stretch reads VLNHSLEVSK…VAAADALSAA (94 aa).

Belongs to the RNase Y family.

The protein localises to the cell membrane. In terms of biological role, endoribonuclease that initiates mRNA decay. The chain is Ribonuclease Y from Listeria monocytogenes serotype 1/2a (strain 10403S).